We begin with the raw amino-acid sequence, 123 residues long: Large ribosomal subunit protein bL17 (123 aa).

Belongs to the bacterial ribosomal protein bL17 family. As to quaternary structure, part of the 50S ribosomal subunit. Contacts protein L32.

The polypeptide is Large ribosomal subunit protein bL17 (Staphylococcus haemolyticus (strain JCSC1435)).